The primary structure comprises 278 residues: Small ribosomal subunit protein uS2 (278 aa).

Disordered stretches follow at residues 216–235 (EAAA…TQWD) and 250–278 (NFAA…EWTN). Over residues 256-278 (ADGNWGATTGGDWAAAGGEEWTN) the composition is skewed to low complexity.

This sequence belongs to the universal ribosomal protein uS2 family. In terms of assembly, component of the small ribosomal subunit. Mature ribosomes consist of a small (40S) and a large (60S) subunit. The 40S subunit contains about 33 different proteins and 1 molecule of RNA (18S). The 60S subunit contains about 49 different proteins and 3 molecules of RNA (25S, 5.8S and 5S). Interacts with ribosomal protein S21.

It is found in the cytoplasm. In terms of biological role, required for the assembly and/or stability of the 40S ribosomal subunit. Required for the processing of the 20S rRNA-precursor to mature 18S rRNA in a late step of the maturation of 40S ribosomal subunits. In Monosiga brevicollis (Choanoflagellate), this protein is Small ribosomal subunit protein uS2.